The following is a 73-amino-acid chain: Frenatin 3.1 (73 aa).

The first 22 residues, 1–22, serve as a signal peptide directing secretion; that stretch reads MHFLKKSIFLVLFLGLVSLSIC. The propeptide occupies 23–46; the sequence is EKEKREDQNEEEVDENEEASEEKR. The disordered stretch occupies residues 25–45; sequence EKREDQNEEEVDENEEASEEK. The span at 30–42 shows a compositional bias: acidic residues; it reads QNEEEVDENEEAS.

As to expression, expressed by the skin glands.

It is found in the secreted. Its function is as follows. Antimicrobial peptide with activity against both Gram-positive and Gram-negative bacteria. The chain is Frenatin 3.1 from Nyctimystes infrafrenatus (White-lipped tree frog).